The primary structure comprises 492 residues: WD repeat-containing protein JIP5 (492 aa).

WD repeat units lie at residues 127-166 (RHKGSVRAMCFDSKGDNIFSVGSDNVLKKANTMTGKVVKK), 178-217 (KKNDKFTKLCASQTHPFILIGDESGNIHVINSENLALSNS), 236-274 (RSAYKFISLGQTTLAYFDVRDKDAKPNVAGNEDGKILIS), 276-317 (DQED…LEDQ), and 365-405 (RNHS…VEEN). 2 stretches are compositionally biased toward acidic residues: residues 404 to 414 (ENASVESDSDE) and 422 to 433 (DLSDDTSSDDET). The interval 404-472 (ENASVESDSD…SKSVKKRKIM (69 aa)) is disordered. Residues 449-462 (KDLKEDHQEEKESN) are compositionally biased toward basic and acidic residues.

As to quaternary structure, interacts with BUD27 and GIS1.

The protein resides in the nucleus. It is found in the nucleolus. The chain is WD repeat-containing protein JIP5 (JIP5) from Saccharomyces cerevisiae (strain ATCC 204508 / S288c) (Baker's yeast).